Reading from the N-terminus, the 604-residue chain is DNA polymerase alpha subunit B (604 aa).

Residues E109–E171 are disordered. Positions N113 to A141 are enriched in polar residues. Phosphothreonine occurs at positions 129 and 132. A phosphoserine mark is found at S143, S149, S154, and S156. Positions S143–P160 are enriched in low complexity.

Belongs to the DNA polymerase alpha subunit B family. In terms of assembly, component of the alpha DNA polymerase complex (also known as the alpha DNA polymerase-primase complex) consisting of four subunits: the catalytic subunit POLA1, the regulatory subunit POLA2, and the primase complex subunits PRIM1 and PRIM2 respectively. Within the complex, POLA1 directly interacts with PRIM2. Phosphorylated in a cell cycle-dependent manner, in G2/M phase.

It is found in the nucleus. In terms of biological role, accessory subunit of the DNA polymerase alpha complex (also known as the alpha DNA polymerase-primase complex) which plays an essential role in the initiation of DNA synthesis. During the S phase of the cell cycle, the DNA polymerase alpha complex (composed of a catalytic subunit POLA1, an accessory subunit POLA2 and two primase subunits, the catalytic subunit PRIM1 and the regulatory subunit PRIM2) is recruited to DNA at the replicative forks via direct interactions with MCM10 and WDHD1. The primase subunit of the polymerase alpha complex initiates DNA synthesis by oligomerising short RNA primers on both leading and lagging strands. These primers are initially extended by the polymerase alpha catalytic subunit and subsequently transferred to polymerase delta and polymerase epsilon for processive synthesis on the lagging and leading strand, respectively. In Bos taurus (Bovine), this protein is DNA polymerase alpha subunit B (POLA2).